The sequence spans 31 residues: Basic phospholipase A2 13 (31 aa).

The protein belongs to the phospholipase A2 family. Group I subfamily. Ca(2+) is required as a cofactor. Expressed by the venom gland.

It is found in the secreted. The catalysed reaction is a 1,2-diacyl-sn-glycero-3-phosphocholine + H2O = a 1-acyl-sn-glycero-3-phosphocholine + a fatty acid + H(+). Functionally, snake venom phospholipase A2 (PLA2) that inhibits neuromuscular transmission by blocking acetylcholine release from the nerve termini. PLA2 catalyzes the calcium-dependent hydrolysis of the 2-acyl groups in 3-sn-phosphoglycerides. This chain is Basic phospholipase A2 13, found in Bungarus fasciatus (Banded krait).